Here is a 188-residue protein sequence, read N- to C-terminus: Ubiquitin-conjugating enzyme E2-21 kDa (188 aa).

The UBC core domain maps to 3–182 (STEKRLLKEY…VHYYIAKYSA (180 aa)). Cysteine 119 functions as the Glycyl thioester intermediate in the catalytic mechanism.

The protein belongs to the ubiquitin-conjugating enzyme family.

It catalyses the reaction S-ubiquitinyl-[E1 ubiquitin-activating enzyme]-L-cysteine + [E2 ubiquitin-conjugating enzyme]-L-cysteine = [E1 ubiquitin-activating enzyme]-L-cysteine + S-ubiquitinyl-[E2 ubiquitin-conjugating enzyme]-L-cysteine.. It participates in protein modification; protein ubiquitination. Catalyzes the covalent attachment of ubiquitin to other proteins. Essential for peroxisome biogenesis. Required for UBC4-independent ubiquitination of PEX5. This Pichia angusta (Yeast) protein is Ubiquitin-conjugating enzyme E2-21 kDa (PEX4).